Consider the following 381-residue polypeptide: Probable G-protein coupled receptor 34 (381 aa).

Topologically, residues 1-61 (MRSHTITMTT…LLSTVLTTSY (61 aa)) are extracellular. 3 N-linked (GlcNAc...) asparagine glycosylation sites follow: N28, N36, and N42. A helical membrane pass occupies residues 62 to 82 (SVIFIVGLVGNIIALYVFLGI). The Cytoplasmic segment spans residues 83 to 88 (HRKRNS). A helical transmembrane segment spans residues 89–109 (IQIYLLNVAIADLLLIFCLPF). The Extracellular portion of the chain corresponds to 110–128 (RIMYHINQNKWTLGVILCK). The cysteines at positions 127 and 204 are disulfide-linked. The helical transmembrane segment at 129–149 (VVGTLFYMNMYISIILLGFIS) threads the bilayer. Topologically, residues 150 to 171 (LDRYIKINRSIQQRKAITTKQS) are cytoplasmic. A helical transmembrane segment spans residues 172–192 (IYVCCIVWMLALGGFLTMIIL). Topologically, residues 193–216 (TLKKGGHNSTMCFHYRDKHNAKGE) are extracellular. N-linked (GlcNAc...) asparagine glycosylation is present at N200. The chain crosses the membrane as a helical span at residues 217 to 237 (AIFNFILVVMFWLIFLLIILS). At 238 to 269 (YIKIGKNLLRISKRRSKFPNSGKYATTARNSF) the chain is on the cytoplasmic side. Residues 270-290 (IVLIIFTICFVPYHAFRFIYI) form a helical membrane-spanning segment. At 291-310 (SSQLNVSSCYWKEIVHKTNE) the chain is on the extracellular side. The N-linked (GlcNAc...) asparagine glycan is linked to N295. Residues 311-331 (IMLVLSSFNSCLDPVMYFLMS) form a helical membrane-spanning segment. Residues 332 to 381 (SNIRKIMCQLLFRRFQGEPSRSESTSEFKPGYSLHDTSVAVKIQSSSKST) are Cytoplasmic-facing.

It belongs to the G-protein coupled receptor 1 family.

The protein localises to the cell membrane. Functionally, G-protein-coupled receptor of lysophosphatidylserine (LysoPS) that plays different roles in immune response. Acts a damage-sensing receptor that triggers tissue repair upon recognition of dying neutrophils. Mechanistically, apoptotic neutrophils release lysophosphatydilserine that are recognized by type 3 innate lymphoid cells (ILC3s) via GPR34, which activates downstream PI3K-AKT and RAS-ERK signaling pathways leading to STAT3 activation and IL-22 production. Plays an important role in microglial function, controlling morphology and phagocytosis. The chain is Probable G-protein coupled receptor 34 (GPR34) from Gorilla gorilla gorilla (Western lowland gorilla).